The chain runs to 136 residues: Large ribosomal subunit protein uL16 (136 aa).

It belongs to the universal ribosomal protein uL16 family. In terms of assembly, part of the 50S ribosomal subunit.

Functionally, binds 23S rRNA and is also seen to make contacts with the A and possibly P site tRNAs. In Rickettsia typhi (strain ATCC VR-144 / Wilmington), this protein is Large ribosomal subunit protein uL16.